A 74-amino-acid polypeptide reads, in one-letter code: Porwaprin-a (74 aa).

The signal sequence occupies residues 1–24 (MSSGGLLLLLGLLTLWEVLTPVSS). Positions 27 to 71 (RPKKLGLCPPRPQKPCVKECKNDWSCPGQQKCCNYGCIDECRDPI) constitute a WAP domain. 4 disulfides stabilise this stretch: Cys34/Cys59, Cys42/Cys63, Cys46/Cys58, and Cys52/Cys67.

It belongs to the venom waprin family. Expressed by the venom gland.

It localises to the secreted. Damages membranes of susceptible bacteria. Has no hemolytic activity. Not toxic to mice. Does not inhibit the proteinases elastase and cathepsin G. In Pseudechis porphyriacus (Red-bellied black snake), this protein is Porwaprin-a.